A 526-amino-acid chain; its full sequence is Probable feruloyl esterase B-2 (526 aa).

The first 18 residues, 1–18, serve as a signal peptide directing secretion; it reads MTKLSLLPLLTLASAVLA. Cystine bridges form between cysteine 27/cysteine 74 and cysteine 62/cysteine 113. N-linked (GlcNAc...) asparagine glycosylation is present at asparagine 52. Asparagine 137 carries N-linked (GlcNAc...) asparagine glycosylation. 4 cysteine pairs are disulfide-bonded: cysteine 186-cysteine 441, cysteine 255-cysteine 272, cysteine 281-cysteine 291, and cysteine 503-cysteine 525. Serine 187 functions as the Acyl-ester intermediate in the catalytic mechanism. Asparagine 233 is a glycosylation site (N-linked (GlcNAc...) asparagine). Ca(2+) contacts are provided by aspartate 256, aspartate 259, alanine 261, aspartate 263, and isoleucine 265. Asparagine 311 carries N-linked (GlcNAc...) asparagine glycosylation. Residues aspartate 400 and histidine 440 each act as charge relay system in the active site. N-linked (GlcNAc...) asparagine glycosylation occurs at asparagine 516.

It belongs to the tannase family.

It is found in the secreted. It catalyses the reaction feruloyl-polysaccharide + H2O = ferulate + polysaccharide.. Functionally, involved in degradation of plant cell walls. Hydrolyzes the feruloyl-arabinose ester bond in arabinoxylans as well as the feruloyl-galactose and feruloyl-arabinose ester bonds in pectin. In Aspergillus fumigatus (strain CBS 144.89 / FGSC A1163 / CEA10) (Neosartorya fumigata), this protein is Probable feruloyl esterase B-2 (faeB-2).